Reading from the N-terminus, the 286-residue chain is Shikimate dehydrogenase (NADP(+)) (286 aa).

Shikimate is bound by residues 20–22 and T67; that span reads SLS. The Proton acceptor role is filled by K71. Positions 92 and 107 each coordinate shikimate. NADP(+) contacts are provided by residues 132–136 and M228; that span reads GAGGA. Shikimate is bound at residue Y230. G251 is a binding site for NADP(+).

It belongs to the shikimate dehydrogenase family. In terms of assembly, homodimer.

It catalyses the reaction shikimate + NADP(+) = 3-dehydroshikimate + NADPH + H(+). It functions in the pathway metabolic intermediate biosynthesis; chorismate biosynthesis; chorismate from D-erythrose 4-phosphate and phosphoenolpyruvate: step 4/7. Involved in the biosynthesis of the chorismate, which leads to the biosynthesis of aromatic amino acids. Catalyzes the reversible NADPH linked reduction of 3-dehydroshikimate (DHSA) to yield shikimate (SA). The sequence is that of Shikimate dehydrogenase (NADP(+)) from Geobacter sulfurreducens (strain ATCC 51573 / DSM 12127 / PCA).